The primary structure comprises 163 residues: Single-stranded DNA-binding protein 2 (163 aa).

The 104-residue stretch at Met1–Glu104 folds into the SSB domain. The disordered stretch occupies residues Arg109–Phe163. Over residues Gly119–Ser130 the composition is skewed to low complexity. Residues Tyr131–Asn140 show a composition bias toward polar residues. Residues Asp158–Phe163 carry the Important for interaction with partner proteins motif.

Homotetramer.

Its function is as follows. Plays an important role in DNA replication, recombination and repair. Binds to ssDNA and to an array of partner proteins to recruit them to their sites of action during DNA metabolism. This Streptococcus pyogenes serotype M18 (strain MGAS8232) protein is Single-stranded DNA-binding protein 2 (ssb2).